Consider the following 1368-residue polypeptide: DNA-directed RNA polymerase subunit beta (1368 aa).

Belongs to the RNA polymerase beta chain family. As to quaternary structure, the RNAP catalytic core consists of 2 alpha, 1 beta, 1 beta' and 1 omega subunit. When a sigma factor is associated with the core the holoenzyme is formed, which can initiate transcription.

It catalyses the reaction RNA(n) + a ribonucleoside 5'-triphosphate = RNA(n+1) + diphosphate. In terms of biological role, DNA-dependent RNA polymerase catalyzes the transcription of DNA into RNA using the four ribonucleoside triphosphates as substrates. The protein is DNA-directed RNA polymerase subunit beta of Burkholderia pseudomallei (strain K96243).